A 206-amino-acid chain; its full sequence is Probable GTP-binding protein EngB (206 aa).

The EngB-type G domain occupies 8-195; it reads RSDEVVLVGR…EDAVNSHFDA (188 aa). Residues 16 to 23, 41 to 45, 60 to 63, 140 to 143, and 175 to 177 each bind GTP; these read GRSNVGKS, GVTRQ, DLPG, NKMD, and ITA. Positions 23 and 43 each coordinate Mg(2+).

This sequence belongs to the TRAFAC class TrmE-Era-EngA-EngB-Septin-like GTPase superfamily. EngB GTPase family. The cofactor is Mg(2+).

Its function is as follows. Necessary for normal cell division and for the maintenance of normal septation. The sequence is that of Probable GTP-binding protein EngB from Halobacterium salinarum (strain ATCC 29341 / DSM 671 / R1).